Here is a 1143-residue protein sequence, read N- to C-terminus: Disease resistance protein Pik-1 (1143 aa).

The structured coiled coil (CC) domain stretch occupies residues 1 to 190; that stretch reads MEAAAMAVTA…PLRIMGGEMQ (190 aa). In terms of domain architecture, HMA spans 189 to 258; sequence MQKIVFKIPM…KVGHAELLQV (70 aa). An HMA-like domain region spans residues 191-264; that stretch reads KIVFKIPMVD…LLQVSQVKED (74 aa). An NB-ARC domain is found at 282-570; it reads HEVKTICILG…WIAEGFVSEE (289 aa). LRR repeat units lie at residues 681-706, 708-731, 732-754, 756-777, 778-800, 802-823, 824-848, 945-968, 979-1002, and 1004-1027; these read FKRL…ICEQ, SLRV…MRKL, KHLE…IGEL, HLRI…IREL, QHLH…VGKL, NLKI…IGEL, NHLQ…QISQ, MPNL…INGT, DSRL…EFKF, and AGPA…VFRC.

The protein belongs to the disease resistance NB-LRR family. Interacts with AVR-Pik through its N-terminal part containing the HMA-like domain.

Its function is as follows. Disease resistance (R) protein that specifically recognizes the AVR-Pik effector avirulence protein from M.oryzae. Resistance proteins guard the plant against pathogens that contain an appropriate avirulence protein via an indirect interaction with this avirulence protein. That triggers a defense system including the hypersensitive response, which restricts the pathogen growth. Contribution of Pik-2 is required to recognize the effector avirulence protein AVR-Pik. This chain is Disease resistance protein Pik-1, found in Oryza sativa subsp. japonica (Rice).